Reading from the N-terminus, the 185-residue chain is Photosystem I assembly protein Ycf4 (185 aa).

The next 2 membrane-spanning stretches (helical) occupy residues 21-43 and 68-90; these read NFFW…ISSY and FYGI…NVGS.

It belongs to the Ycf4 family.

It is found in the plastid. It localises to the chloroplast thylakoid membrane. Its function is as follows. Seems to be required for the assembly of the photosystem I complex. The polypeptide is Photosystem I assembly protein Ycf4 (Aegilops tauschii (Tausch's goatgrass)).